A 338-amino-acid chain; its full sequence is DNA-directed RNA polymerase subunit alpha (338 aa).

The alpha N-terminal domain (alpha-NTD) stretch occupies residues 1 to 234 (MIHKNWAELI…DQLSIFVNFD (234 aa)). Positions 250–338 (FNPLLLKKVD…DLAKKFEDAF (89 aa)) are alpha C-terminal domain (alpha-CTD).

It belongs to the RNA polymerase alpha chain family. Homodimer. The RNAP catalytic core consists of 2 alpha, 1 beta, 1 beta' and 1 omega subunit. When a sigma factor is associated with the core the holoenzyme is formed, which can initiate transcription.

It catalyses the reaction RNA(n) + a ribonucleoside 5'-triphosphate = RNA(n+1) + diphosphate. In terms of biological role, DNA-dependent RNA polymerase catalyzes the transcription of DNA into RNA using the four ribonucleoside triphosphates as substrates. The sequence is that of DNA-directed RNA polymerase subunit alpha from Ruegeria pomeroyi (strain ATCC 700808 / DSM 15171 / DSS-3) (Silicibacter pomeroyi).